Here is a 122-residue protein sequence, read N- to C-terminus: Large ribosomal subunit protein uL14 (122 aa).

It belongs to the universal ribosomal protein uL14 family. Part of the 50S ribosomal subunit. Forms a cluster with proteins L3 and L19. In the 70S ribosome, L14 and L19 interact and together make contacts with the 16S rRNA in bridges B5 and B8.

Its function is as follows. Binds to 23S rRNA. Forms part of two intersubunit bridges in the 70S ribosome. This chain is Large ribosomal subunit protein uL14, found in Mycolicibacterium vanbaalenii (strain DSM 7251 / JCM 13017 / BCRC 16820 / KCTC 9966 / NRRL B-24157 / PYR-1) (Mycobacterium vanbaalenii).